Reading from the N-terminus, the 471-residue chain is MAMSDLPNDLVEEIISRVPVKSIRAVSSTCKNWNTLSNDHSFTRKLFGKTITTKENECLVVMMMDSKVYLMSVNLHRIHKENDDNNIKSSIMHKAKLISLNDDDILNNTYIIFHCNGLLLLLGFTDDGIKLVVTNPHLGQTRWIKPRKANYQFCDKYAIGYEKKKNNSLRTNKMLLFHKESFCFRIYWFEIYNFNSASWNVFYFTRDWELPYSQGVSLKGNTYWFAREINIRGERIDDPPDFLICFDFTTERFGPRLHLPFHSHSDDTVILSSVREEQLAVLIKRFDLWRMEIWVTTKIEPKEVSWNKLFLAVDMIPLITAFQFCNVSFFIDEKKNVVVVLGKDVLNTRNIANIIGNDGYFKQVDLGESTNKYCYPLVCSYVPSSVQIKQATRVMHHHHIVLRAVVRAVRDSDRERKLNNGREHKISRRTRIHERILFRMLKLDEEAIGIRSRSVPRDRYQQGFASSPCRA.

An F-box domain is found at 1–46 (MAMSDLPNDLVEEIISRVPVKSIRAVSSTCKNWNTLSNDHSFTRKL).

In Arabidopsis thaliana (Mouse-ear cress), this protein is Putative F-box protein At5g36200.